A 623-amino-acid polypeptide reads, in one-letter code: Glucokinase regulatory protein (623 aa).

SIS domains are found at residues 90-286 and 320-476; these read VQEV…QGVV and VGIS…VQKF. Beta-D-fructose 1-phosphate-binding positions include 109–110, glutamate 153, and 179–181; these read TS and SVG. 109-110 is a binding site for beta-D-fructose 6-phosphate; it reads TS. Beta-D-fructose 6-phosphate is bound at residue 179–181; the sequence is SVG. Residues 199 to 200 form an important for interaction with GCK region; sequence AV. Glutamate 348 is a binding site for beta-D-fructose 1-phosphate. The segment at 463-465 is essential for interaction with GCK; sequence LLF.

It belongs to the GCKR family. In terms of assembly, interacts (fructose 6-phosphate bound form) with GCK.

It localises to the cytoplasm. It is found in the nucleus. The protein localises to the mitochondrion. Functionally, regulates glucokinase (GCK) by forming an inactive complex with this enzyme. Acts by promoting GCK recruitment to the nucleus, possibly to provide a reserve of GCK that can be quickly released in the cytoplasm after a meal. The affinity of GCKR for GCK is modulated by fructose metabolites: GCKR with bound fructose 6-phosphate has increased affinity for GCK, while GCKR with bound fructose 1-phosphate has strongly decreased affinity for GCK and does not inhibit GCK activity. The polypeptide is Glucokinase regulatory protein (Mus musculus (Mouse)).